Reading from the N-terminus, the 545-residue chain is MGVLKFKHIFFGSAVELSGVFQIVFIFLLIPCCLTANFRAPPVIPNVPFLWAWNAPTEFCLGKSGEPLDMSLFSLFGSPRKNKTGQGITIFYVDRLGYYPYIDPHTGAIVHGRIPQLGPLQQHLTKLRQEILYYMPKDNVGLAVIDWEEWLPTWLRNWKPKDIYRIKSIELVKSQHPQYNHSYATEKAKRDFEKAGKDFMEETLKLGRLLRPNHLWGYYLFPDCYNHHYDKPNLYKGSCFDIEKKRNDDLSWLWKESTALFPSVYLTSRARSATALSKLYVVRNRVHEAIRVSKIPDDKSPLPNFVYTRLVFTDQIFQFLSHHDLVYTIGEIVALGASGIVVWGSQSLARSMKSCLHLDNYMKTILNPYLINVTLAAKMCNQVLCQEQGVCTRKNWNPNDYLHLNPGNFAIQLGSNGTYKVDGKPTLTDLEQFSKNFQCSCYTNLNCKERTDMNNVRTVNVCAVENVCIDTNVGPQAVTYAPKEKKDVAHILSNTTSINSSTTMSLPFPRKHVSGCLLVLCMYSQYLNICYRLVAIGIQHGYYLK.

The first 35 residues, 1–35 (MGVLKFKHIFFGSAVELSGVFQIVFIFLLIPCCLT), serve as a signal peptide directing secretion. 2 disulfides stabilise this stretch: C60–C355 and C224–C239. An N-linked (GlcNAc...) asparagine glycan is attached at N82. The active-site Proton donor is the E148. N180 carries an N-linked (GlcNAc...) asparagine glycan. Residue N372 is glycosylated (N-linked (GlcNAc...) asparagine). Intrachain disulfides connect C380/C391, C385/C439, and C441/C468.

It belongs to the glycosyl hydrolase 56 family. Testis.

Its subcellular location is the cell membrane. It catalyses the reaction Random hydrolysis of (1-&gt;4)-linkages between N-acetyl-beta-D-glucosamine and D-glucuronate residues in hyaluronate.. In terms of biological role, involved in sperm-egg adhesion. Upon fertilization sperm must first penetrate a layer of cumulus cells that surrounds the egg before reaching the zona pellucida. The cumulus cells are embedded in a matrix containing hyaluronic acid which is formed prior to ovulation. This protein aids in penetrating the layer of cumulus cells by digesting hyaluronic acid. The polypeptide is Hyaluronidase PH-20 (SPAM1) (Oryctolagus cuniculus (Rabbit)).